The primary structure comprises 288 residues: Aquaporin PIP1-5 (288 aa).

The tract at residues 1-36 (MEGKEEDVRLGANRYSERQPIGTAAQGTEEKDYKEP) is disordered. The next 2 membrane-spanning stretches (helical) occupy residues 57 to 77 (IAEFVATFLFLYISILTVMGV) and 92 to 114 (IAWSFGGMIFALVYCTAGISGGH). Positions 116–118 (NPA) match the NPA 1 motif. 3 consecutive transmembrane segments (helical) span residues 135-155 (LFYMVMQCLGAICGAGVVKGF), 177-197 (GDGLGAEIVGTFVLVYTVFSA), and 211-231 (ILAPLPIGFAVFLVHLATIPI). The NPA 2 signature appears at 237-239 (NPA). The chain crosses the membrane as a helical span at residues 259 to 279 (IFWVGPFIGAALAAIYHVVII).

This sequence belongs to the MIP/aquaporin (TC 1.A.8) family. PIP (TC 1.A.8.11) subfamily. As to expression, highly expressed in roots and at lower levels in anthers and silks.

It localises to the cell membrane. In terms of biological role, water channel required to facilitate the transport of water across cell membrane. The sequence is that of Aquaporin PIP1-5 (PIP1-5) from Zea mays (Maize).